A 94-amino-acid polypeptide reads, in one-letter code: Translation initiation factor IF-1 (94 aa).

Residues 1 to 72 (MAKEELIQFE…EKGRLIFRHK (72 aa)) form the S1-like domain. The segment at 71–94 (HKDERPGGTGAPRSGPPRGQFRRR) is disordered.

This sequence belongs to the IF-1 family. In terms of assembly, component of the 30S ribosomal translation pre-initiation complex which assembles on the 30S ribosome in the order IF-2 and IF-3, IF-1 and N-formylmethionyl-tRNA(fMet); mRNA recruitment can occur at any time during PIC assembly.

It localises to the cytoplasm. One of the essential components for the initiation of protein synthesis. Stabilizes the binding of IF-2 and IF-3 on the 30S subunit to which N-formylmethionyl-tRNA(fMet) subsequently binds. Helps modulate mRNA selection, yielding the 30S pre-initiation complex (PIC). Upon addition of the 50S ribosomal subunit IF-1, IF-2 and IF-3 are released leaving the mature 70S translation initiation complex. This chain is Translation initiation factor IF-1, found in Rhodopseudomonas palustris (strain HaA2).